We begin with the raw amino-acid sequence, 326 residues long: Beta-ketoacyl-[acyl-carrier-protein] synthase III (326 aa).

Active-site residues include cysteine 112 and histidine 251. The tract at residues 252-256 is ACP-binding; sequence QANSR. Asparagine 281 is an active-site residue.

It belongs to the thiolase-like superfamily. FabH family. Homodimer.

The protein resides in the cytoplasm. It catalyses the reaction malonyl-[ACP] + acetyl-CoA + H(+) = 3-oxobutanoyl-[ACP] + CO2 + CoA. It functions in the pathway lipid metabolism; fatty acid biosynthesis. In terms of biological role, catalyzes the condensation reaction of fatty acid synthesis by the addition to an acyl acceptor of two carbons from malonyl-ACP. Catalyzes the first condensation reaction which initiates fatty acid synthesis and may therefore play a role in governing the total rate of fatty acid production. Possesses both acetoacetyl-ACP synthase and acetyl transacylase activities. Its substrate specificity determines the biosynthesis of branched-chain and/or straight-chain of fatty acids. In Clostridium botulinum (strain Loch Maree / Type A3), this protein is Beta-ketoacyl-[acyl-carrier-protein] synthase III.